The sequence spans 220 residues: Outer membrane protein assembly factor BamD (220 aa).

An N-terminal signal peptide occupies residues Met-1–Gly-22. Cys-23 carries the N-palmitoyl cysteine lipid modification. Cys-23 carries S-diacylglycerol cysteine lipidation.

Belongs to the BamD family. In terms of assembly, part of the Bam complex.

The protein resides in the cell outer membrane. Its function is as follows. Part of the outer membrane protein assembly complex, which is involved in assembly and insertion of beta-barrel proteins into the outer membrane. The protein is Outer membrane protein assembly factor BamD of Helicobacter pylori (strain ATCC 700392 / 26695) (Campylobacter pylori).